The sequence spans 321 residues: Mas-related G-protein coupled receptor member H (321 aa).

The Extracellular segment spans residues 1-35 (MEPLATTLCPQECTQTTRNETPNETTWSSEHVTKY). Asn23 carries N-linked (GlcNAc...) asparagine glycosylation. The chain crosses the membrane as a helical span at residues 36-56 (TYISISLVICSLGLVGNGLLI). At 57–71 (WFLIFCIKRKPFTIY) the chain is on the cytoplasmic side. Residues 72-92 (ILHLAFADFMVLLCSSIIQLV) form a helical membrane-spanning segment. Over 93–102 (NTFHIYDSTL) the chain is Extracellular. The chain crosses the membrane as a helical span at residues 103-126 (VSYAVLFMIFGYNTGLHLLTAISV). Topologically, residues 127–147 (ERCLSVLYPIWYHCRRPKHQS) are cytoplasmic. A helical membrane pass occupies residues 148–168 (TVACTLLWALSVLVSGLENFF). Over 169-188 (CILEVKPQFPECRYVYIFSC) the chain is Extracellular. A helical membrane pass occupies residues 189–209 (TLTFLVFVPLMVFSNLILFIQ). Over 210–225 (VCCNLKPRQPAKLYVI) the chain is Cytoplasmic. Residues 226-246 (IMATVILFLVFAMPMKVLLII) form a helical membrane-spanning segment. Position 247 (Gly247) is a topological domain, extracellular. The chain crosses the membrane as a helical span at residues 248–271 (YYSNSTDASVWKSLPYLNMLSTIN). Residues 272 to 320 (CSINPIVYFVVGSLRRKRSRKSLKEALQKVFEEKPVVASRENEVQFSLP) are Cytoplasmic-facing.

This sequence belongs to the G-protein coupled receptor 1 family. Mas subfamily.

The protein localises to the cell membrane. In terms of biological role, orphan receptor. May regulate nociceptor function and/or development, including the sensation or modulation of pain. The polypeptide is Mas-related G-protein coupled receptor member H (Mrgprh) (Rattus norvegicus (Rat)).